Consider the following 346-residue polypeptide: Porphobilinogen deaminase (346 aa).

An S-(dipyrrolylmethanemethyl)cysteine modification is found at Cys242. The tract at residues 317–346 (ATEPGARSGTGAVRPPETDLSNPSPMENPQ) is disordered. Polar residues predominate over residues 335 to 346 (DLSNPSPMENPQ).

Belongs to the HMBS family. As to quaternary structure, monomer. The cofactor is dipyrromethane.

The catalysed reaction is 4 porphobilinogen + H2O = hydroxymethylbilane + 4 NH4(+). Its pathway is porphyrin-containing compound metabolism; protoporphyrin-IX biosynthesis; coproporphyrinogen-III from 5-aminolevulinate: step 2/4. Functionally, tetrapolymerization of the monopyrrole PBG into the hydroxymethylbilane pre-uroporphyrinogen in several discrete steps. The chain is Porphobilinogen deaminase from Nocardia farcinica (strain IFM 10152).